A 278-amino-acid polypeptide reads, in one-letter code: Protoheme IX farnesyltransferase (278 aa).

9 helical membrane passes run 12 to 32, 33 to 53, 83 to 103, 105 to 125, 130 to 150, 157 to 177, 204 to 224, 228 to 248, and 257 to 277; these read VIWL…QTVD, WSKL…SAAF, ALVY…YLLG, LPGL…TIWL, WLNI…GYAL, LPAV…IWAL, VIIS…YLAF, LLGL…SILA, and MWKM…ALVF.

Belongs to the UbiA prenyltransferase family. Protoheme IX farnesyltransferase subfamily.

It is found in the cell membrane. It carries out the reaction heme b + (2E,6E)-farnesyl diphosphate + H2O = Fe(II)-heme o + diphosphate. Its pathway is porphyrin-containing compound metabolism; heme O biosynthesis; heme O from protoheme: step 1/1. Its function is as follows. Converts heme B (protoheme IX) to heme O by substitution of the vinyl group on carbon 2 of heme B porphyrin ring with a hydroxyethyl farnesyl side group. The protein is Protoheme IX farnesyltransferase of Pyrobaculum islandicum (strain DSM 4184 / JCM 9189 / GEO3).